A 485-amino-acid chain; its full sequence is MFAHTALRQRCAKWLLATGLFLLLGACVEKPSTLERVKEDGVLRVITRNSPATYFQDRNGETGFEYELVQHFADDLGVKLQIETADNLDELYDALGKPSGPVLAAAGLVSSERRKTQVRYSHPYLEVTPQVIYRNGRPRPTGAKGLVGKKIMVLKGSSHADQLAELKKQYPALQYEESDAVEVVDLLRMVDEGQIDLTLVDSNELAMNQVYFPNVRVAFDLGETRDQRWAVAAGEDNSLLNEINEYLDKAQKNGTLQRLKDRYYGHVDVLGYVGAYTFAQHLQQRLPKYEKHFKSYAKVEQVDWRLLAAIGYQESMWQPEVTSKTGVRGLMMLTQRTAQAMGVSNRLDPRQSIQGGAKYFMKIKEELDDSIKEPDRTWFALAAYNVGGGHLEDARTLAKREKLNPNKWLDVKKMLPRLAQKQWYRQTKYGYARGGEPVHFVANIRRYYDILTWVTQPQLEGQVAEGNLHVPGVNKDKPADKSSPM.

Positions 1–29 (MFAHTALRQRCAKWLLATGLFLLLGACVE) are cleaved as a signal peptide. The tract at residues 30–267 (KPSTLERVKE…RLKDRYYGHV (238 aa)) is non-LT domain. The interval 268-485 (DVLGYVGAYT…DKPADKSSPM (218 aa)) is LT domain. The active site involves E314. The segment at 465 to 485 (EGNLHVPGVNKDKPADKSSPM) is disordered. Residues 474–485 (NKDKPADKSSPM) show a composition bias toward basic and acidic residues.

It in the N-terminal section; belongs to the bacterial solute-binding protein 3 family. The protein in the C-terminal section; belongs to the transglycosylase Slt family.

It is found in the cell outer membrane. It catalyses the reaction Exolytic cleavage of the (1-&gt;4)-beta-glycosidic linkage between N-acetylmuramic acid (MurNAc) and N-acetylglucosamine (GlcNAc) residues in peptidoglycan, from either the reducing or the non-reducing ends of the peptidoglycan chains, with concomitant formation of a 1,6-anhydrobond in the MurNAc residue.. In terms of biological role, murein-degrading enzyme that degrades murein glycan strands and insoluble, high-molecular weight murein sacculi, with the concomitant formation of a 1,6-anhydromuramoyl product. Lytic transglycosylases (LTs) play an integral role in the metabolism of the peptidoglycan (PG) sacculus. Their lytic action creates space within the PG sacculus to allow for its expansion as well as for the insertion of various structures such as secretion systems and flagella. The polypeptide is Membrane-bound lytic murein transglycosylase F (Pseudomonas putida (strain ATCC 47054 / DSM 6125 / CFBP 8728 / NCIMB 11950 / KT2440)).